We begin with the raw amino-acid sequence, 276 residues long: Undecaprenyl-diphosphatase 2 (276 aa).

8 helical membrane passes run 1–21 (MSLWFLVFLSVLQGVTELFPV), 44–64 (QLLPFLVALHLGTAFALLWYF), 87–107 (GHLMWALIIGTIPAGLVGLLL), 114–134 (VFHDLRIVAVALIVNGILLWL), 150–170 (LTFKQAFFVGLAQVGALIPGF), 190–210 (AAEFSFLLGTPIIFAAGLLEL), 222–242 (DALLGGVLTAIAAYLSVRFLM), and 251–271 (LASFGLYCALAGLFCLGWFMF).

This sequence belongs to the UppP family.

It is found in the cell inner membrane. It catalyses the reaction di-trans,octa-cis-undecaprenyl diphosphate + H2O = di-trans,octa-cis-undecaprenyl phosphate + phosphate + H(+). In terms of biological role, catalyzes the dephosphorylation of undecaprenyl diphosphate (UPP). Confers resistance to bacitracin. The sequence is that of Undecaprenyl-diphosphatase 2 from Burkholderia thailandensis (strain ATCC 700388 / DSM 13276 / CCUG 48851 / CIP 106301 / E264).